The primary structure comprises 312 residues: DNA-directed RNA polymerase subunit alpha (312 aa).

The alpha N-terminal domain (alpha-NTD) stretch occupies residues 1–225 (MIEFEKPNIT…VEHFKVFESA (225 aa)). The interval 243-312 (KEKKLEMTIE…DLGLSLRQED (70 aa)) is alpha C-terminal domain (alpha-CTD).

The protein belongs to the RNA polymerase alpha chain family. As to quaternary structure, homodimer. The RNAP catalytic core consists of 2 alpha, 1 beta, 1 beta' and 1 omega subunit. When a sigma factor is associated with the core the holoenzyme is formed, which can initiate transcription.

It carries out the reaction RNA(n) + a ribonucleoside 5'-triphosphate = RNA(n+1) + diphosphate. In terms of biological role, DNA-dependent RNA polymerase catalyzes the transcription of DNA into RNA using the four ribonucleoside triphosphates as substrates. This is DNA-directed RNA polymerase subunit alpha from Lactobacillus helveticus (strain DPC 4571).